The sequence spans 345 residues: UPF0324 membrane protein HH_1161 (345 aa).

10 helical membrane-spanning segments follow: residues 7–29 (GFLYGILFLAFFSLLSLFISATL), 33–50 (LSPLIIGILLGAALSPFY), 90–112 (LGLNGFLISLFIVAGVFIAAIFI), 122–141 (ISLLVGIGSAVCGAAAILAL), 154–176 (VALGFIVIFGLIGMILLPAIYYA), 186–208 (WGIFIGASLHEVANVVGAAAISP), 215–237 (IIVKMTRVVLLVPLLLIISYIIF), 262–281 (LYIPYFAFGFLGVIVLNSFI), 293–312 (FASKICLVFAMVALGLQIDW), and 322–344 (TFALALILFIILMFGTYGLVYIM).

It belongs to the UPF0324 family.

Its subcellular location is the cell membrane. This chain is UPF0324 membrane protein HH_1161, found in Helicobacter hepaticus (strain ATCC 51449 / 3B1).